Here is a 491-residue protein sequence, read N- to C-terminus: Acetyl-coenzyme A carboxylase carboxyl transferase subunit beta, chloroplastic (491 aa).

The disordered stretch occupies residues 28–56 (LGPIENTSESEDPNRNDMKKNSHSWGSRD). The CoA carboxyltransferase N-terminal domain occupies 223 to 491 (LWVQCENCYG…FPLNKNSIEH (269 aa)). Positions 227, 230, 246, and 249 each coordinate Zn(2+). The C4-type zinc-finger motif lies at 227 to 249 (CENCYGLNYKKILKSKMNLCEQC).

This sequence belongs to the AccD/PCCB family. Acetyl-CoA carboxylase is a heterohexamer composed of biotin carboxyl carrier protein, biotin carboxylase and 2 subunits each of ACCase subunit alpha and ACCase plastid-coded subunit beta (accD). Requires Zn(2+) as cofactor.

The protein resides in the plastid. The protein localises to the chloroplast stroma. It carries out the reaction N(6)-carboxybiotinyl-L-lysyl-[protein] + acetyl-CoA = N(6)-biotinyl-L-lysyl-[protein] + malonyl-CoA. It participates in lipid metabolism; malonyl-CoA biosynthesis; malonyl-CoA from acetyl-CoA: step 1/1. Component of the acetyl coenzyme A carboxylase (ACC) complex. Biotin carboxylase (BC) catalyzes the carboxylation of biotin on its carrier protein (BCCP) and then the CO(2) group is transferred by the transcarboxylase to acetyl-CoA to form malonyl-CoA. The protein is Acetyl-coenzyme A carboxylase carboxyl transferase subunit beta, chloroplastic of Daucus carota (Wild carrot).